The chain runs to 237 residues: MRFDPPLEEGRLLRRYKRFLADIETTTGELLTIHCPNTGSMLNCMVEGGQVWFSRSNDPKRKLPGTWEISETPQGRLACVNTGRANGLVEEALRAGLISELNGFTGLKREVPYGQENSRIDFRLDYPDGPAYVEVKSVTLGFDGTPVAAFPDAVTQRGAKHLRELASLAREGVRAVQLYCVNLSGIDAVRPAQEIDPGYAAALREARAAGVEVLAYGVCLTAEQVFIDRRLEVLLGD.

It belongs to the SfsA family.

The sequence is that of Sugar fermentation stimulation protein homolog from Pseudomonas fluorescens (strain ATCC BAA-477 / NRRL B-23932 / Pf-5).